A 1171-amino-acid chain; its full sequence is ATP-dependent helicase/deoxyribonuclease subunit B (1171 aa).

The region spanning 1-343 is the UvrD-like helicase ATP-binding domain; sequence MSLRFVIGRA…LVAEENYRYR (343 aa). Position 8-15 (8-15) interacts with ATP; it reads GRAGSGKS. The 307-residue stretch at 281-587 folds into the UvrD-like helicase C-terminal domain; it reads MEQPRFHSPA…QFANIPPSLD (307 aa). [4Fe-4S] cluster is bound by residues Cys805, Cys1129, Cys1132, and Cys1138.

Belongs to the helicase family. AddB/RexB type 1 subfamily. As to quaternary structure, heterodimer of AddA and AddB. Requires Mg(2+) as cofactor. [4Fe-4S] cluster is required as a cofactor.

Its function is as follows. The heterodimer acts as both an ATP-dependent DNA helicase and an ATP-dependent, dual-direction single-stranded exonuclease. Recognizes the chi site generating a DNA molecule suitable for the initiation of homologous recombination. The AddB subunit has 5' -&gt; 3' nuclease activity but not helicase activity. The sequence is that of ATP-dependent helicase/deoxyribonuclease subunit B from Bacillus thuringiensis (strain Al Hakam).